A 327-amino-acid chain; its full sequence is Movement protein (327 aa).

Residues 297 to 327 are a coiled coil; the sequence is IASSSSTENELARVSQNIDLLKNKLKEICGE.

This sequence belongs to the caulimoviridae movement protein family. In terms of assembly, homotrimer, through the coiled-coil domain. Interacts with VAP. May interact (via N-terminus) with host prenylated Rab acceptor protein 1D (PRA1D).

It is found in the host cell junction. Its subcellular location is the host plasmodesma. Its function is as follows. Transports viral genome to neighboring plant cells directly through plasmosdesmata, without any budding. The movement protein allows efficient cell to cell propagation, by bypassing the host cell wall barrier. Acts by forming tubules structures that increase the size exclusion limit (SEL) of plasmodesmata, thereby allowing viral ribonucleocapsids to spread directly to neighboring cells. This is Movement protein from Cauliflower mosaic virus (strain D/H) (CaMV).